Consider the following 431-residue polypeptide: Selenocysteine lyase (431 aa).

Position 239 is an N6-(pyridoxal phosphate)lysine (K239). C367 serves as the catalytic S-selanylcysteine intermediate.

This sequence belongs to the class-V pyridoxal-phosphate-dependent aminotransferase family. Homodimer. Requires pyridoxal 5'-phosphate as cofactor.

It is found in the cytoplasm. The protein resides in the cytosol. The catalysed reaction is L-selenocysteine + AH2 = hydrogenselenide + L-alanine + A + H(+). Catalyzes the decomposition of L-selenocysteine to L-alanine and elemental selenium. The sequence is that of Selenocysteine lyase (scly) from Xenopus tropicalis (Western clawed frog).